We begin with the raw amino-acid sequence, 549 residues long: Cytoplasmic trehalase (549 aa).

Residues Arg168, 175-176 (WD), Asn212, 221-223 (RSQ), 292-294 (RDE), and Gly324 each bind substrate. Catalysis depends on proton donor/acceptor residues Asp326 and Glu509. Glu525 is a binding site for substrate.

This sequence belongs to the glycosyl hydrolase 37 family. In terms of assembly, monomer.

The protein localises to the cytoplasm. The catalysed reaction is alpha,alpha-trehalose + H2O = alpha-D-glucose + beta-D-glucose. It functions in the pathway glycan degradation; trehalose degradation; D-glucose from alpha,alpha-trehalose: step 1/1. Functionally, hydrolyzes trehalose to glucose. Could be involved, in cells returning to low osmolarity conditions, in the utilization of the accumulated cytoplasmic trehalose, which was synthesized in response to high osmolarity. This chain is Cytoplasmic trehalase, found in Shigella flexneri serotype 5b (strain 8401).